The following is a 483-amino-acid chain: Trigger factor (483 aa).

Residues Thr-166–Pro-251 form the PPIase FKBP-type domain. Over residues Gly-435 to Met-460 the composition is skewed to basic and acidic residues. Positions Gly-435–Lys-483 are disordered. Residues Ala-467–Lys-483 show a composition bias toward low complexity.

Belongs to the FKBP-type PPIase family. Tig subfamily.

It localises to the cytoplasm. The enzyme catalyses [protein]-peptidylproline (omega=180) = [protein]-peptidylproline (omega=0). In terms of biological role, involved in protein export. Acts as a chaperone by maintaining the newly synthesized protein in an open conformation. Functions as a peptidyl-prolyl cis-trans isomerase. This Mycoplasma mobile (strain ATCC 43663 / 163K / NCTC 11711) (Mesomycoplasma mobile) protein is Trigger factor.